A 214-amino-acid chain; its full sequence is MDDLESEFNLKVVLVSFKQCLNEKEEVLLEYYLAGWRGLVRFLNSLGTIFSFISKDVVTKLQIMDQLRSGPQQEHYSSLQAMVAYEVGNQLVDLERRSRHPDSGCRTVLRLHRALRWLQLFLEGVRTSPEDARTSVLCTDSYNASLATYHPWIIRRAVTVAFCALPTRKVFLESMNVGSSEQAVEMLNEALPFIERVYNISQKLYAEHALLDLP.

5 residues coordinate an N-acylsphingoid base 1-phosphate: aspartate 56, lysine 60, arginine 106, arginine 110, and histidine 150.

The protein belongs to the GLTP family.

Its subcellular location is the cytoplasm. The protein resides in the cytosol. It localises to the golgi apparatus. It is found in the trans-Golgi network membrane. The protein localises to the cell membrane. Its subcellular location is the endosome membrane. The protein resides in the nucleus outer membrane. It carries out the reaction N-(hexadecanoyl)-sphing-4-enine-1-phosphate(in) = N-(hexadecanoyl)-sphing-4-enine-1-phosphate(out). The enzyme catalyses N-(9Z-octadecenoyl)-sphing-4-enine-1-phosphate(in) = N-(9Z-octadecenoyl)-sphing-4-enine-1-phosphate(out). Its function is as follows. Mediates the intracellular transfer of ceramide-1-phosphate (C1P) between organelle membranes and the cell membrane. Required for normal structure of the Golgi stacks. Can bind phosphoceramides with a variety of aliphatic chains, but has a preference for lipids with saturated C16:0 or monounsaturated C18:1 aliphatic chains, and is inefficient with phosphoceramides containing lignoceryl (C24:0). Plays a role in the regulation of the cellular levels of ceramide-1-phosphate, and thereby contributes to the regulation of phospholipase PLA2G4A activity and the release of arachidonic acid. Has no activity with galactosylceramide, lactosylceramide, sphingomyelin, phosphatidylcholine, phosphatidic acid and ceramide. C1P transfer is stimulated by phosphatidylserine in C1P source vesicles. Regulates autophagy, inflammasome mediated IL1B and IL18 processing, and pyroptosis, but not apoptosis. The chain is Ceramide-1-phosphate transfer protein (CPTP) from Bos taurus (Bovine).